The primary structure comprises 603 residues: Methylenetetrahydrofolate reductase 1 (603 aa).

E21 (proton donor/acceptor) is an active-site residue. Residues 21–26 (EFFPPK) and 53–54 (TW) contribute to the NAD(+) site. Residues 53-54 (TW), H82, 112-114 (RGD), 130-131 (YA), Y153, and K173 contribute to the FAD site. D114 contacts substrate. The substrate site is built by Q184 and Y276. At S355 the chain carries Phosphoserine.

Belongs to the methylenetetrahydrofolate reductase family. The cofactor is FAD.

The enzyme catalyses (6S)-5-methyl-5,6,7,8-tetrahydrofolate + NADP(+) = (6R)-5,10-methylene-5,6,7,8-tetrahydrofolate + NADPH + H(+). It catalyses the reaction (6S)-5-methyl-5,6,7,8-tetrahydrofolate + NAD(+) = (6R)-5,10-methylene-5,6,7,8-tetrahydrofolate + NADH + H(+). It participates in one-carbon metabolism; tetrahydrofolate interconversion. In terms of biological role, major methylenetetrahydrofolate reductase required to generate the methyl groups necessary for methionine synthetase to convert homocysteine to methionine. Performs 80 to 85 percent of the total methylenetetrahydrofolate reductase activity of the cells. The sequence is that of Methylenetetrahydrofolate reductase 1 (met9) from Schizosaccharomyces pombe (strain 972 / ATCC 24843) (Fission yeast).